The following is a 301-amino-acid chain: 5'-adenylylsulfate reductase-like 5 (301 aa).

The signal sequence occupies residues 1–21 (MTRCAVVAAVAAVLLVAGAAA). Residues 51-164 (CIRIEPSPPV…LVDFYKETTG (114 aa)) form the Thioredoxin domain. Residue Asn-139 is glycosylated (N-linked (GlcNAc...) asparagine). Residues 201–221 (FVLLAVLFIILKVAAHFVPIV) form a helical membrane-spanning segment. Asn-268 is a glycosylation site (N-linked (GlcNAc...) asparagine).

It localises to the membrane. This is 5'-adenylylsulfate reductase-like 5 (APRL5) from Oryza sativa subsp. japonica (Rice).